A 210-amino-acid polypeptide reads, in one-letter code: Pyridoxine/pyridoxamine 5'-phosphate oxidase (210 aa).

Residues arginine 7–tyrosine 10 and lysine 65 each bind substrate. FMN-binding positions include arginine 60–lysine 65, phenylalanine 75–threonine 76, arginine 81, lysine 82, and glutamine 104. Residues tyrosine 122, arginine 126, and serine 130 each contribute to the substrate site. Residues glutamine 139–serine 140 and tryptophan 183 contribute to the FMN site. Arginine 189 to histidine 191 contributes to the substrate binding site. Residue arginine 193 coordinates FMN.

Belongs to the pyridoxamine 5'-phosphate oxidase family. As to quaternary structure, homodimer. Requires FMN as cofactor.

It carries out the reaction pyridoxamine 5'-phosphate + O2 + H2O = pyridoxal 5'-phosphate + H2O2 + NH4(+). The catalysed reaction is pyridoxine 5'-phosphate + O2 = pyridoxal 5'-phosphate + H2O2. Its pathway is cofactor metabolism; pyridoxal 5'-phosphate salvage; pyridoxal 5'-phosphate from pyridoxamine 5'-phosphate: step 1/1. It participates in cofactor metabolism; pyridoxal 5'-phosphate salvage; pyridoxal 5'-phosphate from pyridoxine 5'-phosphate: step 1/1. Its function is as follows. Catalyzes the oxidation of either pyridoxine 5'-phosphate (PNP) or pyridoxamine 5'-phosphate (PMP) into pyridoxal 5'-phosphate (PLP). The sequence is that of Pyridoxine/pyridoxamine 5'-phosphate oxidase from Haemophilus influenzae (strain 86-028NP).